Consider the following 423-residue polypeptide: MKDGAHHRPVRRTISLVLAGGRGSRLQDLTENCAKPAVHFGGKFRIIDFVLSNCVNSGLHRIGVLTQYKSHSLLRHLQHGWSFLRNEVNEFIDLLPAQQRVDEASWYRGTADAVYQNIDILREHDPKYILVLAGDHVYKMNYASLIEDHVALGAPCTVACIEVPLAEASAFGVMTVDAMRHITRFDEKPAHPQPMLDQPEQALVSMGVYVFDADYLFAALQTDIEDAASHHDFGKDLIPAIVSRGEAMAHPFDLSCVKSSPESPSYWRDVGTVDAYWAANIDLTATIPQLDLYDKDWPIWTYQPTSPPAKFVFDDEGRRGMAVDSLVSGGCIVSGALVRRSVLFTGVHLHSYSSVEESVLLPEADVGRHCRLRKVVVDEGCRIPAGMTIGFDAEDDARRFHVSADGVVLVTVAMLEALRVSQA.

Alpha-D-glucose 1-phosphate contacts are provided by residues tyrosine 107, glycine 172, glutamate 187–lysine 188, and serine 205.

The protein belongs to the bacterial/plant glucose-1-phosphate adenylyltransferase family. In terms of assembly, homotetramer.

The catalysed reaction is alpha-D-glucose 1-phosphate + ATP + H(+) = ADP-alpha-D-glucose + diphosphate. Its pathway is glycan biosynthesis; glycogen biosynthesis. In terms of biological role, involved in the biosynthesis of ADP-glucose, a building block required for the elongation reactions to produce glycogen. Catalyzes the reaction between ATP and alpha-D-glucose 1-phosphate (G1P) to produce pyrophosphate and ADP-Glc. The protein is Glucose-1-phosphate adenylyltransferase of Albidiferax ferrireducens (strain ATCC BAA-621 / DSM 15236 / T118) (Rhodoferax ferrireducens).